Here is a 334-residue protein sequence, read N- to C-terminus: Malate dehydrogenase 2 (334 aa).

An NAD(+)-binding site is contributed by 12-18 (GAAGRVA). Residues R93 and R99 each coordinate substrate. NAD(+) is bound by residues N106, Q113, and 130–132 (VGN). Substrate contacts are provided by N132 and R166. H191 acts as the Proton acceptor in catalysis.

Belongs to the LDH/MDH superfamily. MDH type 2 family.

It catalyses the reaction (S)-malate + NAD(+) = oxaloacetate + NADH + H(+). Functionally, catalyzes the reversible oxidation of malate to oxaloacetate. This is Malate dehydrogenase 2 from Albidiferax ferrireducens (strain ATCC BAA-621 / DSM 15236 / T118) (Rhodoferax ferrireducens).